Consider the following 246-residue polypeptide: Pyridoxine 5'-phosphate synthase (246 aa).

3-amino-2-oxopropyl phosphate is bound by residues Asn-8 and Arg-19. His-44 (proton acceptor) is an active-site residue. 2 residues coordinate 1-deoxy-D-xylulose 5-phosphate: Arg-46 and His-51. Catalysis depends on Glu-76, which acts as the Proton acceptor. Thr-106 is a binding site for 1-deoxy-D-xylulose 5-phosphate. The active-site Proton donor is His-198. 3-amino-2-oxopropyl phosphate-binding positions include Asp-199 and 221 to 222 (GH).

The protein belongs to the PNP synthase family. As to quaternary structure, homooctamer; tetramer of dimers.

It is found in the cytoplasm. It carries out the reaction 3-amino-2-oxopropyl phosphate + 1-deoxy-D-xylulose 5-phosphate = pyridoxine 5'-phosphate + phosphate + 2 H2O + H(+). Its pathway is cofactor biosynthesis; pyridoxine 5'-phosphate biosynthesis; pyridoxine 5'-phosphate from D-erythrose 4-phosphate: step 5/5. Catalyzes the complicated ring closure reaction between the two acyclic compounds 1-deoxy-D-xylulose-5-phosphate (DXP) and 3-amino-2-oxopropyl phosphate (1-amino-acetone-3-phosphate or AAP) to form pyridoxine 5'-phosphate (PNP) and inorganic phosphate. This Brucella suis (strain ATCC 23445 / NCTC 10510) protein is Pyridoxine 5'-phosphate synthase.